Consider the following 249-residue polypeptide: Eukaryotic translation initiation factor 3 subunit K (249 aa).

The 177-residue stretch at 46–222 (FDCYANLALL…VKVPTNKENE (177 aa)) folds into the PCI domain.

Belongs to the eIF-3 subunit K family. As to quaternary structure, component of the eukaryotic translation initiation factor 3 (eIF-3) complex.

It is found in the cytoplasm. In terms of biological role, component of the eukaryotic translation initiation factor 3 (eIF-3) complex, which is involved in protein synthesis of a specialized repertoire of mRNAs and, together with other initiation factors, stimulates binding of mRNA and methionyl-tRNAi to the 40S ribosome. The eIF-3 complex specifically targets and initiates translation of a subset of mRNAs involved in cell proliferation. The protein is Eukaryotic translation initiation factor 3 subunit K of Aspergillus fumigatus (strain CBS 144.89 / FGSC A1163 / CEA10) (Neosartorya fumigata).